A 179-amino-acid chain; its full sequence is Large ribosomal subunit protein uL10 (179 aa).

The protein belongs to the universal ribosomal protein uL10 family. As to quaternary structure, part of the ribosomal stalk of the 50S ribosomal subunit. The N-terminus interacts with L11 and the large rRNA to form the base of the stalk. The C-terminus forms an elongated spine to which L12 dimers bind in a sequential fashion forming a multimeric L10(L12)X complex.

Forms part of the ribosomal stalk, playing a central role in the interaction of the ribosome with GTP-bound translation factors. The polypeptide is Large ribosomal subunit protein uL10 (Mycolicibacterium vanbaalenii (strain DSM 7251 / JCM 13017 / BCRC 16820 / KCTC 9966 / NRRL B-24157 / PYR-1) (Mycobacterium vanbaalenii)).